The sequence spans 107 residues: Serine palmitoyltransferase-regulating protein TSC3 (107 aa).

A helical transmembrane segment spans residues 72–92 (VFFLVVFTLSLFGLLKWVLSL).

The protein resides in the endoplasmic reticulum membrane. Its function is as follows. Stimulates the activity of serine palmitoyltransferase (SPT). This is Serine palmitoyltransferase-regulating protein TSC3 (TSC3) from Eremothecium gossypii (strain ATCC 10895 / CBS 109.51 / FGSC 9923 / NRRL Y-1056) (Yeast).